Here is a 356-residue protein sequence, read N- to C-terminus: Histidinol-phosphate aminotransferase (356 aa).

The residue at position 214 (Lys-214) is an N6-(pyridoxal phosphate)lysine.

It belongs to the class-II pyridoxal-phosphate-dependent aminotransferase family. Histidinol-phosphate aminotransferase subfamily. In terms of assembly, homodimer. Pyridoxal 5'-phosphate is required as a cofactor.

The catalysed reaction is L-histidinol phosphate + 2-oxoglutarate = 3-(imidazol-4-yl)-2-oxopropyl phosphate + L-glutamate. Its pathway is amino-acid biosynthesis; L-histidine biosynthesis; L-histidine from 5-phospho-alpha-D-ribose 1-diphosphate: step 7/9. The chain is Histidinol-phosphate aminotransferase from Escherichia coli O7:K1 (strain IAI39 / ExPEC).